The sequence spans 82 residues: Polyferredoxin protein FwdG (82 aa).

2 consecutive 4Fe-4S ferredoxin-type domains span residues 4–33 and 51–80; these read YELV…PETW and VVTV…LVFK. Cys13, Cys16, Cys19, Cys23, Cys60, Cys63, Cys66, and Cys70 together coordinate [4Fe-4S] cluster.

[4Fe-4S] cluster is required as a cofactor.

In Methanocaldococcus jannaschii (strain ATCC 43067 / DSM 2661 / JAL-1 / JCM 10045 / NBRC 100440) (Methanococcus jannaschii), this protein is Polyferredoxin protein FwdG (fwdG).